The chain runs to 276 residues: Secretagogin (276 aa).

EF-hand domains are found at residues 12–47 (LDAA…LLAK), 58–93 (NVQK…EDEN), 105–140 (DNSV…LFLH), 149–184 (ELEE…QENF), 197–232 (ERKR…MMEL), and 240–276 (VDLD…KINP). Ca(2+) is bound by residues aspartate 25, tyrosine 31, glutamate 36, serine 73, glutamate 75, arginine 77, glutamate 82, aspartate 118, aspartate 120, serine 122, glutamate 129, aspartate 162, asparagine 164, aspartate 166, arginine 168, aspartate 173, aspartate 210, serine 212, threonine 214, glutamate 221, aspartate 254, asparagine 256, aspartate 258, lysine 260, and glutamate 265.

The protein localises to the cytoplasm. The protein resides in the secreted. It localises to the cytoplasmic vesicle. It is found in the secretory vesicle membrane. The chain is Secretagogin (Scgn) from Mus musculus (Mouse).